A 251-amino-acid polypeptide reads, in one-letter code: Triosephosphate isomerase, glycosomal (251 aa).

2 residues coordinate substrate: N12 and K14. The active-site Electrophile is the H96. E168 functions as the Proton acceptor in the catalytic mechanism.

The protein belongs to the triosephosphate isomerase family. In terms of assembly, homodimer.

It localises to the glycosome. It catalyses the reaction D-glyceraldehyde 3-phosphate = dihydroxyacetone phosphate. The protein operates within carbohydrate biosynthesis; gluconeogenesis. It functions in the pathway carbohydrate degradation; glycolysis; D-glyceraldehyde 3-phosphate from glycerone phosphate: step 1/1. The protein is Triosephosphate isomerase, glycosomal of Trypanosoma cruzi.